Reading from the N-terminus, the 682-residue chain is Amphiphysin (682 aa).

2 coiled-coil regions span residues 10–84 (AKNV…LHEV) and 144–191 (DYDS…QEEL). Positions 24–240 (VLQKLGKADE…MTKLGDQHAD (217 aa)) constitute a BAR domain. Disordered regions lie at residues 244-310 (TIQG…PKLT), 446-470 (ILAE…ETTG), 501-530 (GAVR…QEKV), and 561-606 (AAAE…ASDM). Over residues 261-274 (PSPPEEVSPLPSPT) the composition is skewed to pro residues. Residues 503 to 527 (VRTEQEAAAEGDKPQGEEKDVDVSQ) show a composition bias toward basic and acidic residues. Over residues 567–596 (TQGTDSETSQIGSEQKATEEIQTTPSQDQP) the composition is skewed to polar residues. One can recognise an SH3 domain in the interval 609-682 (GFLFKVEVLH…FPENFTRHLE (74 aa)).

As to quaternary structure, heterodimer with BIN1. Binds SH3GLB1. As to expression, is abundant in the forebrain and cerebellum. It is also found in the adrenal gland, anterior and posterior pituitary.

It is found in the cytoplasmic vesicle. The protein localises to the secretory vesicle. It localises to the synaptic vesicle membrane. Its subcellular location is the cytoplasm. The protein resides in the cytoskeleton. Its function is as follows. May participate in mechanisms of regulated exocytosis in synapses and certain endocrine cell types. May control the properties of the membrane associated cytoskeleton. The protein is Amphiphysin (AMPH) of Gallus gallus (Chicken).